A 154-amino-acid polypeptide reads, in one-letter code: Small ribosomal subunit protein uS15 (154 aa).

Residues 1-10 (MARMHSRRRG) are compositionally biased toward basic residues. The interval 1–32 (MARMHSRRRGSSGSDRPTADEPPEWSEVDEDA) is disordered. Residues 21-32 (EPPEWSEVDEDA) are compositionally biased toward acidic residues.

The protein belongs to the universal ribosomal protein uS15 family. Part of the 30S ribosomal subunit.

The polypeptide is Small ribosomal subunit protein uS15 (Natronomonas pharaonis (strain ATCC 35678 / DSM 2160 / CIP 103997 / JCM 8858 / NBRC 14720 / NCIMB 2260 / Gabara) (Halobacterium pharaonis)).